A 198-amino-acid polypeptide reads, in one-letter code: MKKFARFIGIDDGYFVRNVHKKTKLIGAITKHTILDGVLSREITIDGDDVSEKIIDMIKNSNHYYQIRGIILYGITFAGFNIADVELIYKNLGLPIIIVMERPPKDIFYKAIEKYKPNGIELIKKAGPIYKTKTPFGYTYYQVYGIDKDTASNIINNLAIVSKIPEPARVAHMIARGVTKGDSSKPRAGGDSNPGPAG.

The tract at residues 179-198 (TKGDSSKPRAGGDSNPGPAG) is disordered.

This sequence belongs to the UPF0215 family.

This is UPF0215 protein NEQ431 from Nanoarchaeum equitans (strain Kin4-M).